The chain runs to 834 residues: Unextended protein (834 aa).

The signal sequence occupies residues 1–20 (MNTYFISFITIIIFANGING). At 21–182 (TSVDTSNKLL…DFLKIKTFEP (162 aa)) the chain is on the extracellular side. 3 N-linked (GlcNAc...) asparagine glycosylation sites follow: N38, N42, and N156. The 180-residue stretch at 182-361 (PLIPVWLAII…NDVNDLDKNE (180 aa)) folds into the CNNM transmembrane domain. Residues 183 to 203 (LIPVWLAIIIIVTCLGFSALF) traverse the membrane as a helical segment. At 204-244 (SGLNLGLMSMDRTELKILRNTGTEKEKKYASKIAPVRDQGN) the chain is on the cytoplasmic side. The chain crosses the membrane as a helical span at residues 245 to 265 (YLLCSILLGNVLVNSTFTILL). Topologically, residues 266-267 (DG) are extracellular. A helical transmembrane segment spans residues 268–288 (LTSGLFAVIFSTLAIVLFGEI). Over 289–298 (TPQAVCSRHG) the chain is Cytoplasmic. The chain crosses the membrane as a helical span at residues 299 to 319 (LAIGAKTILVTKTVMAITAPL). Residues 320 to 834 (SYPVSRILDK…DKFESKQSKP (515 aa)) lie on the Extracellular side of the membrane. CBS domains lie at 380 to 441 (MTHI…NTPL) and 448 to 515 (YQNP…IVDE). Residue N522 is glycosylated (N-linked (GlcNAc...) asparagine). 604–656 (YIFTQGKAVDFFVLILEGRVEVTIGKEALMFESGPFTYFGTQALVPNVVIDSP) is a binding site for a nucleoside 3',5'-cyclic phosphate. A disordered region spans residues 739 to 765 (CFAQNQSTRRLSNRSINSSPTNMNRSP). Over residues 740 to 763 (FAQNQSTRRLSNRSINSSPTNMNR) the composition is skewed to polar residues. N743, N751, and N790 each carry an N-linked (GlcNAc...) asparagine glycan. The tract at residues 807–834 (SGEQDTTAASMPLLPKLDDKFESKQSKP) is disordered. Residues 822-834 (KLDDKFESKQSKP) are compositionally biased toward basic and acidic residues.

Belongs to the ACDP family. In terms of assembly, interacts with PRL-1, possibly at the plasma membrane.

The protein resides in the cell membrane. Its function is as follows. Probable metal transporter. Acts downstream of PRL-1 and protects the nervous system against olfactory carbon dioxide stimulation. This chain is Unextended protein, found in Drosophila melanogaster (Fruit fly).